The following is a 194-amino-acid chain: MSTTIDIPESSKVVKGKGVVAAPLRPGGWKKGVAIMDFILRLGAIAAALGAAATMGTSDQTLPFFTQFFQFEASYDSFTTFQFFVITMALVGGYLVLSLPFSVVAIIRPHAVGPRLFLIILDTVFLTLATASAASAAAVVYLAHNGDQDTNWLAICNQFGDFCAQTSSAVVSSFVAVVVFVLLIVMSALAMGKP.

At 1 to 32 (MSTTIDIPESSKVVKGKGVVAAPLRPGGWKKG) the chain is on the cytoplasmic side. A helical transmembrane segment spans residues 33 to 53 (VAIMDFILRLGAIAAALGAAA). The Extracellular portion of the chain corresponds to 54–82 (TMGTSDQTLPFFTQFFQFEASYDSFTTFQ). The chain crosses the membrane as a helical span at residues 83–103 (FFVITMALVGGYLVLSLPFSV). Topologically, residues 104–115 (VAIIRPHAVGPR) are cytoplasmic. The helical transmembrane segment at 116 to 136 (LFLIILDTVFLTLATASAASA) threads the bilayer. Topologically, residues 137-168 (AAVVYLAHNGDQDTNWLAICNQFGDFCAQTSS) are extracellular. A helical membrane pass occupies residues 169–189 (AVVSSFVAVVVFVLLIVMSAL). Over 190–194 (AMGKP) the chain is Cytoplasmic.

The protein belongs to the Casparian strip membrane proteins (CASP) family. Homodimer and heterodimers.

The protein localises to the cell membrane. Its function is as follows. Regulates membrane-cell wall junctions and localized cell wall deposition. Required for establishment of the Casparian strip membrane domain (CSD) and the subsequent formation of Casparian strips, a cell wall modification of the root endodermis that determines an apoplastic barrier between the intraorganismal apoplasm and the extraorganismal apoplasm and prevents lateral diffusion. The protein is Casparian strip membrane protein 2 of Vigna unguiculata (Cowpea).